The sequence spans 572 residues: 2-hydroxyacyl-CoA lyase (572 aa).

N-acetylalanine is present on Ala2. Glu58 is a binding site for thiamine diphosphate. Residues 407–488 form a thiamine pyrophosphate binding region; that stretch reads TMDVGRSVLV…IIVFNNGGVY (82 aa). Mg(2+)-binding residues include Asp457 and Asn484.

Belongs to the TPP enzyme family. In terms of assembly, homotetramer. It depends on Mg(2+) as a cofactor. Requires thiamine diphosphate as cofactor.

It carries out the reaction an (R)-2-hydroxy-long-chain-fatty acyl-CoA = a long-chain fatty aldehyde + formyl-CoA. The enzyme catalyses a 2-hydroxy-3-methyl fatty acyl-CoA = a 2-methyl-branched fatty aldehyde + formyl-CoA. Its function is as follows. Catalyzes a carbon-carbon cleavage reaction; cleaves a 2-hydroxy-3-methylacyl-CoA into formyl-CoA and a 2-methyl-branched fatty aldehyde. This chain is 2-hydroxyacyl-CoA lyase (HACL), found in Arabidopsis thaliana (Mouse-ear cress).